Here is a 258-residue protein sequence, read N- to C-terminus: Imidazole glycerol phosphate synthase subunit HisF (258 aa).

Residues Asp-12 and Asp-131 contribute to the active site.

The protein belongs to the HisA/HisF family. Heterodimer of HisH and HisF.

It localises to the cytoplasm. It catalyses the reaction 5-[(5-phospho-1-deoxy-D-ribulos-1-ylimino)methylamino]-1-(5-phospho-beta-D-ribosyl)imidazole-4-carboxamide + L-glutamine = D-erythro-1-(imidazol-4-yl)glycerol 3-phosphate + 5-amino-1-(5-phospho-beta-D-ribosyl)imidazole-4-carboxamide + L-glutamate + H(+). It participates in amino-acid biosynthesis; L-histidine biosynthesis; L-histidine from 5-phospho-alpha-D-ribose 1-diphosphate: step 5/9. Its function is as follows. IGPS catalyzes the conversion of PRFAR and glutamine to IGP, AICAR and glutamate. The HisF subunit catalyzes the cyclization activity that produces IGP and AICAR from PRFAR using the ammonia provided by the HisH subunit. This Corynebacterium diphtheriae (strain ATCC 700971 / NCTC 13129 / Biotype gravis) protein is Imidazole glycerol phosphate synthase subunit HisF.